Here is a 689-residue protein sequence, read N- to C-terminus: Methionine--tRNA ligase (689 aa).

A 'HIGH' region motif is present at residues 15–25 (PYANGPIHLGH). Zn(2+)-binding residues include Cys146, Cys149, Cys159, and Cys162. The 'KMSKS' region motif lies at 332–336 (KMSKS). Residue Lys335 coordinates ATP. Residues 588–689 (DFAKIDLRIA…EGAQPGMRVK (102 aa)) form the tRNA-binding domain.

Belongs to the class-I aminoacyl-tRNA synthetase family. MetG type 1 subfamily. Homodimer. Zn(2+) is required as a cofactor.

It localises to the cytoplasm. It catalyses the reaction tRNA(Met) + L-methionine + ATP = L-methionyl-tRNA(Met) + AMP + diphosphate. Functionally, is required not only for elongation of protein synthesis but also for the initiation of all mRNA translation through initiator tRNA(fMet) aminoacylation. The chain is Methionine--tRNA ligase from Shewanella baltica (strain OS223).